A 72-amino-acid polypeptide reads, in one-letter code: Translation initiation factor IF-1 (72 aa).

Residues 1-72 (MAKDDVIQMQ…SRARIVFRAK (72 aa)) form the S1-like domain.

It belongs to the IF-1 family. Component of the 30S ribosomal translation pre-initiation complex which assembles on the 30S ribosome in the order IF-2 and IF-3, IF-1 and N-formylmethionyl-tRNA(fMet); mRNA recruitment can occur at any time during PIC assembly.

The protein resides in the cytoplasm. Functionally, one of the essential components for the initiation of protein synthesis. Stabilizes the binding of IF-2 and IF-3 on the 30S subunit to which N-formylmethionyl-tRNA(fMet) subsequently binds. Helps modulate mRNA selection, yielding the 30S pre-initiation complex (PIC). Upon addition of the 50S ribosomal subunit IF-1, IF-2 and IF-3 are released leaving the mature 70S translation initiation complex. The chain is Translation initiation factor IF-1 from Burkholderia thailandensis (strain ATCC 700388 / DSM 13276 / CCUG 48851 / CIP 106301 / E264).